A 106-amino-acid chain; its full sequence is MNDSEFHRLADTLWLTIEERLDNWDGDSDIDCEINGGVLTLSFENGSKIIINRQEPLHQVWLATKQGGYHFDLKGDEWICDRSGATFWDLLEQAATQQAGEAVSFR.

It belongs to the frataxin family.

Its function is as follows. Involved in iron-sulfur (Fe-S) cluster assembly. May act as a regulator of Fe-S biogenesis. In Salmonella arizonae (strain ATCC BAA-731 / CDC346-86 / RSK2980), this protein is Iron-sulfur cluster assembly protein CyaY.